The chain runs to 543 residues: Secreted effector protein SptP (543 aa).

The interval 35–139 is chaperone-binding; the sequence is TDKAYVAPEK…FINIIKNKDN (105 aa). Residues 162–293 form the Bacterial Rho-GAP domain; that stretch reads DVGAESKQPL…TAEFEKIKAG (132 aa). One can recognise a Tyrosine-protein phosphatase domain in the interval 315-543; sequence IPINQQTQVK…QAQLLMTTAS (229 aa). The Phosphocysteine intermediate role is filled by Cys-481.

Forms a complex with SicP.

It localises to the secreted. Its subcellular location is the host cytoplasm. It carries out the reaction O-phospho-L-tyrosyl-[protein] + H2O = L-tyrosyl-[protein] + phosphate. In terms of biological role, effector proteins function to alter host cell physiology and promote bacterial survival in host tissues. This protein includes tyrosine phosphatase and GTPase activating protein (GAP) activities. After bacterial internalization, GAP mediates the reversal of the cytoskeletal changes induced by SopE. This function is independent of its tyrosine phosphatase activity, which remains unclear. This chain is Secreted effector protein SptP (sptP), found in Salmonella paratyphi A (strain ATCC 9150 / SARB42).